Reading from the N-terminus, the 502-residue chain is Xylan O-acetyltransferase 13 (502 aa).

The Cytoplasmic portion of the chain corresponds to 1-53 (MWSALFSHLREVHKRSGVKEEKLIMKSPPAAGEAGCHKPQATATNKMTVLQSP). A helical; Signal-anchor for type II membrane protein transmembrane segment spans residues 54–76 (LGLRTILTSLVAFFIVVSSVSLL). Over 77–502 (FDRGQDAQAQ…EFLYAYIMHK (426 aa)) the chain is Lumenal. 4 disulfide bridges follow: Cys152–Cys203, Cys174–Cys239, Cys183–Cys483, and Cys399–Cys479. N-linked (GlcNAc...) asparagine glycosylation is found at Asn153, Asn163, Asn189, and Asn209. Residues 226–228 (GDS) carry the GDS motif motif. The active-site Nucleophile is Ser228. Residues Asn255, Asn267, Asn372, Asn401, and Asn442 are each glycosylated (N-linked (GlcNAc...) asparagine). The Proton donor role is filled by Asp478. The DXXH motif motif lies at 478–481 (DCTH). His481 (proton acceptor) is an active-site residue.

This sequence belongs to the PC-esterase family. TBL subfamily.

Its subcellular location is the golgi apparatus membrane. Xylan acetyltransferase required for 2-O- and 3-O-monoacetylation of xylosyl residues in xylan. Catalyzes the 2-O-acetylation of xylan, followed by nonenzymatic acetyl migration to the O-3 position, resulting in products that are monoacetylated at both O-2 and O-3 positions. This is Xylan O-acetyltransferase 13 from Oryza sativa subsp. japonica (Rice).